Consider the following 301-residue polypeptide: Probable porphobilinogen deaminase (301 aa).

The residue at position 241 (cysteine 241) is an S-(dipyrrolylmethanemethyl)cysteine.

It belongs to the HMBS family. The cofactor is dipyrromethane.

The enzyme catalyses 4 porphobilinogen + H2O = hydroxymethylbilane + 4 NH4(+). It participates in porphyrin-containing compound metabolism; protoporphyrin-IX biosynthesis; coproporphyrinogen-III from 5-aminolevulinate: step 2/4. Its function is as follows. Tetrapolymerization of the monopyrrole PBG into the hydroxymethylbilane pre-uroporphyrinogen in several discrete steps. This is Probable porphobilinogen deaminase from Pyrobaculum islandicum (strain DSM 4184 / JCM 9189 / GEO3).